An 800-amino-acid polypeptide reads, in one-letter code: Protein gfi-3 (800 aa).

Positions Glu-346–Glu-366 form a coiled coil. TPR repeat units lie at residues Ala-526 to Glu-559 and Ile-637 to Thr-670.

The APC/C complex is probably composed of at least 12 subunits: apc-2, apc-10, apc-11, cdc-26, emb-1, emb-27, emb-30, mat-1, mat-2, mat-3, such-1 and gfi-3. As to expression, expressed in gut cells and mature sperm stored in the spermatheca.

Its pathway is protein modification; protein ubiquitination. Functionally, probable component of the anaphase promoting complex/cyclosome (APC/C), a cell cycle-regulated E3 ubiquitin ligase that controls progression through mitosis and the G1 phase of the cell cycle. The APC/C complex acts by mediating ubiquitination and subsequent degradation of target proteins. Required for the metaphase to anaphase transition in meiosis. The polypeptide is Protein gfi-3 (Caenorhabditis elegans).